The primary structure comprises 885 residues: Alanine--tRNA ligase (885 aa).

The Zn(2+) site is built by His571, His575, Cys674, and His678.

This sequence belongs to the class-II aminoacyl-tRNA synthetase family. Zn(2+) is required as a cofactor.

The protein resides in the cytoplasm. It catalyses the reaction tRNA(Ala) + L-alanine + ATP = L-alanyl-tRNA(Ala) + AMP + diphosphate. Catalyzes the attachment of alanine to tRNA(Ala) in a two-step reaction: alanine is first activated by ATP to form Ala-AMP and then transferred to the acceptor end of tRNA(Ala). Also edits incorrectly charged Ser-tRNA(Ala) and Gly-tRNA(Ala) via its editing domain. The sequence is that of Alanine--tRNA ligase from Clavibacter michiganensis subsp. michiganensis (strain NCPPB 382).